Reading from the N-terminus, the 308-residue chain is Growth/differentiation factor 15 (308 aa).

Positions 1 to 29 (MPGQELKTLNGSQMLLVLLVLLWPPHGGA) are cleaved as a signal peptide. A propeptide spanning residues 30-192 (VSLAEASRAS…HLRPRASRGR (163 aa)) is cleaved from the precursor. N70 is a glycosylation site (N-linked (GlcNAc...) asparagine). Residues 152 to 179 (APALHLRLSPPPSQSDQLLVKSSSSRPQ) form a disordered region. Residues 165–178 (QSDQLLVKSSSSRP) show a composition bias toward polar residues. Disulfide bonds link C203–C210, C211–C274, C240–C305, and C244–C307.

It belongs to the TGF-beta family. In terms of assembly, homodimer; disulfide-linked. Interacts with GFRAL and RET; ligand of GFRAL, which mediates GDF15 internalization and cellular signaling through interaction with RET via the formation of a 2:2:2 ternary complex composed of GDF15, GFRAL and RET. In terms of tissue distribution, detected in plasma (at protein level).

It is found in the secreted. Hormone produced in response to various stresses to confer information about those stresses to the brain, and trigger an aversive response, characterized by nausea and/or loss of appetite. The aversive response is both required to reduce continuing exposure to those stresses at the time of exposure and to promote avoidance behavior in the future. Acts by binding to its receptor, GFRAL, activating GFRAL-expressing neurons localized in the area postrema and nucleus tractus solitarius of the brainstem. It then triggers the activation of neurons localized within the parabrachial nucleus and central amygdala, which constitutes part of the 'emergency circuit' that shapes responses to stressful conditions. The GDF15-GFRAL signal induces expression of genes involved in metabolism, such as lipid metabolism in adipose tissues. Required for avoidance behavior in response to food allergens: induced downstream of mast cell activation to promote aversion and minimize harmful effects of exposure to noxious substances. In addition to suppress appetite, also promotes weight loss by enhancing energy expenditure in muscle: acts by increasing calcium futile cycling in muscle. Contributes to the effect of metformin, an anti-diabetic drug, on appetite reduction and weight loss: produced in the kidney in response to metformin treatment, thereby activating the GDF15-GFRAL response, leading to reduced appetite and weight. Produced in response to anticancer drugs, such as camptothecin or cisplatin, promoting nausea and contributing to malnutrition. Overproduced in many cancers, promoting anorexia in cancer (cachexia). Responsible for the risk of nausea during pregnancy: high levels of GDF15 during pregnancy, mostly originating from embryos, are associated with increased nausea. Maternal sensitivity to nausea is probably determined by pre-pregnancy exposure to GDF15, females with naturally high level of GDF15 being less susceptible to nausea than females with low levels of GDF15 before pregnancy. Promotes metabolic adaptation in response to systemic inflammation caused by bacterial and viral infections in order to promote tissue tolerance and prevent tissue damage. Inhibits growth hormone signaling on hepatocytes. This chain is Growth/differentiation factor 15, found in Macaca fascicularis (Crab-eating macaque).